The primary structure comprises 113 residues: Cytochrome c (113 aa).

Ala1 is modified (N-acetylalanine). Residues Cys22, Cys25, and His26 each coordinate heme c. At Lys80 the chain carries N6,N6,N6-trimethyllysine. A heme c-binding site is contributed by Met88. Lys94 is modified (N6,N6,N6-trimethyllysine).

Belongs to the cytochrome c family. In terms of processing, binds 1 heme c group covalently per subunit.

Its subcellular location is the mitochondrion intermembrane space. Electron carrier protein. The oxidized form of the cytochrome c heme group can accept an electron from the heme group of the cytochrome c1 subunit of cytochrome reductase. Cytochrome c then transfers this electron to the cytochrome oxidase complex, the final protein carrier in the mitochondrial electron-transport chain. This chain is Cytochrome c, found in Ginkgo biloba (Ginkgo).